Consider the following 98-residue polypeptide: Large ribosomal subunit protein uL23 (98 aa).

The protein belongs to the universal ribosomal protein uL23 family. In terms of assembly, part of the 50S ribosomal subunit. Contacts protein L29, and trigger factor when it is bound to the ribosome.

One of the early assembly proteins it binds 23S rRNA. One of the proteins that surrounds the polypeptide exit tunnel on the outside of the ribosome. Forms the main docking site for trigger factor binding to the ribosome. This chain is Large ribosomal subunit protein uL23, found in Rickettsia bellii (strain OSU 85-389).